The chain runs to 395 residues: Imidazolonepropionase (395 aa).

His-63 and His-65 together coordinate Fe(3+). Zn(2+)-binding residues include His-63 and His-65. 3 residues coordinate 4-imidazolone-5-propanoate: Arg-72, Tyr-135, and His-168. Tyr-135 serves as a coordination point for N-formimidoyl-L-glutamate. Position 233 (His-233) interacts with Fe(3+). His-233 provides a ligand contact to Zn(2+). Gln-236 contacts 4-imidazolone-5-propanoate. Asp-308 contacts Fe(3+). Residue Asp-308 coordinates Zn(2+). The N-formimidoyl-L-glutamate site is built by Asn-310 and Gly-312. Residue Thr-313 participates in 4-imidazolone-5-propanoate binding.

Belongs to the metallo-dependent hydrolases superfamily. HutI family. It depends on Zn(2+) as a cofactor. Fe(3+) serves as cofactor.

Its subcellular location is the cytoplasm. It carries out the reaction 4-imidazolone-5-propanoate + H2O = N-formimidoyl-L-glutamate. The protein operates within amino-acid degradation; L-histidine degradation into L-glutamate; N-formimidoyl-L-glutamate from L-histidine: step 3/3. In terms of biological role, catalyzes the hydrolytic cleavage of the carbon-nitrogen bond in imidazolone-5-propanoate to yield N-formimidoyl-L-glutamate. It is the third step in the universal histidine degradation pathway. In Cereibacter sphaeroides (strain KD131 / KCTC 12085) (Rhodobacter sphaeroides), this protein is Imidazolonepropionase.